Reading from the N-terminus, the 341-residue chain is MVGEMETKENPNPTPDYLMQLMNDKKLMSSLPNFCGIFNHLERLLDEEISRVRKDMYNDTLNGSTEKRSAELPDAVGPIVQLQEKLYVPVKEYPDFNFVGRILGPRGLTAKQLEAETGCKIMVRGKGSMRDKKKEEQNRGKPNWEHLNEDLHVLITVEDAQNRAEIKLKRAVEEVKKLLVPAAEGEDSLKKMQLMELAILNGTYRDANIKSPALAFSLAATAQAAPRIITGPAPVLPPAALRTPTPAGPTIMPLIRQIQTAVMPNGTPHPTAAIVPPGPEAGLIYTPYEYPYTLAPATSILEYPIEPSGVLGAVATKVRRHDMRVHPYQRIVTADRAATGN.

The tract at residues 11-82 (PNPTPDYLMQ…PDAVGPIVQL (72 aa)) is qua1 domain; involved in homodimerization. The KH domain occupies 87-153 (YVPVKEYPDF…WEHLNEDLHV (67 aa)). A qua2 domain; involved in RNA binding region spans residues 182–213 (AAEGEDSLKKMQLMELAILNGTYRDANIKSPA). Ser-188 is modified (phosphoserine). An Omega-N-methylarginine modification is found at Arg-227. Arg-242 is subject to Asymmetric dimethylarginine; by CARM1; alternate. Arg-242 is subject to Omega-N-methylarginine; alternate. The residue at position 256 (Arg-256) is an Omega-N-methylarginine. The SH3-binding motif lies at 276-279 (PPGP). The Nuclear localization signal signature appears at 324–330 (RVHPYQR).

Belongs to the quaking family. As to quaternary structure, homodimer; does not require RNA to homodimerize. Able to heterodimerize with BICC1. Methylated by PRMT1. Post-translationally, tyrosine phosphorylated at its C-terminus, probably by FYN. Phosphorylation leads to decreased mRNA-binding affinity, affecting transport and/or stabilization of MBP mRNA. In terms of processing, ubiquitinated by RNF6 in macrophages, leading to its degradation. In terms of tissue distribution, present in myelinating oligodendrocytes (at protein level).

Its subcellular location is the nucleus. The protein localises to the cytoplasm. RNA reader protein, which recognizes and binds specific RNAs, thereby regulating RNA metabolic processes, such as pre-mRNA splicing, circular RNA (circRNA) formation, mRNA export, mRNA stability and/or translation. Involved in various cellular processes, such as mRNA storage into stress granules, apoptosis, lipid deposition, interferon response, glial cell fate and development. Binds to the 5'-NACUAAY-N(1,20)-UAAY-3' RNA core sequence. Acts as a mRNA modification reader that specifically recognizes and binds mRNA transcripts modified by internal N(7)-methylguanine (m7G). Promotes the formation of circular RNAs (circRNAs) during the epithelial to mesenchymal transition and in cardiomyocytes: acts by binding to sites flanking circRNA-forming exons. CircRNAs are produced by back-splicing circularization of pre-mRNAs. Plays a central role in myelinization via 3 distinct mechanisms. First, acts by protecting and promoting stability of target mRNAs such as MBP, SIRT2 and CDKN1B, which promotes oligodendrocyte differentiation. Second, participates in mRNA transport by regulating the nuclear export of MBP mRNA. Finally, indirectly regulates mRNA splicing of MAG pre-mRNA during oligodendrocyte differentiation by acting as a negative regulator of MAG exon 12 alternative splicing: acts by binding to HNRNPA1 mRNA splicing factor, preventing its translation. Involved in microglia differentiation and remyelination by regulating microexon alternative splicing of the Rho GTPase pathway. Involved in macrophage differentiation: promotes monocyte differentiation by regulating pre-mRNA splicing in naive peripheral blood monocytes. Acts as an important regulator of muscle development: required for the contractile function of cardiomyocytes by regulating alternative splicing of cardiomyocyte transcripts. Acts as a negative regulator of thermogenesis by decreasing stability, nuclear export and translation of mRNAs encoding PPARGC1A and UCP1. Also required for visceral endoderm function and blood vessel development. May also play a role in smooth muscle development. In addition to its RNA-binding activity, also acts as a nuclear transcription coactivator for SREBF2/SREBP2. This is KH domain-containing RNA-binding protein QKI from Rattus norvegicus (Rat).